We begin with the raw amino-acid sequence, 130 residues long: Small ribosomal subunit protein uS9 (130 aa).

This sequence belongs to the universal ribosomal protein uS9 family.

This chain is Small ribosomal subunit protein uS9, found in Nitrosospira multiformis (strain ATCC 25196 / NCIMB 11849 / C 71).